The primary structure comprises 182 residues: UPF0301 protein NMC1274 (182 aa).

Belongs to the UPF0301 (AlgH) family.

The protein is UPF0301 protein NMC1274 of Neisseria meningitidis serogroup C / serotype 2a (strain ATCC 700532 / DSM 15464 / FAM18).